We begin with the raw amino-acid sequence, 484 residues long: Cobyric acid synthase (484 aa).

In terms of domain architecture, GATase cobBQ-type spans 249-438 (QLRVAVPVFT…LHGIFDRPET (190 aa)). The active-site Nucleophile is cysteine 330. Residue histidine 430 is part of the active site.

Belongs to the CobB/CobQ family. CobQ subfamily.

It participates in cofactor biosynthesis; adenosylcobalamin biosynthesis. Its function is as follows. Catalyzes amidations at positions B, D, E, and G on adenosylcobyrinic A,C-diamide. NH(2) groups are provided by glutamine, and one molecule of ATP is hydrogenolyzed for each amidation. This chain is Cobyric acid synthase, found in Vibrio cholerae serotype O1 (strain ATCC 39541 / Classical Ogawa 395 / O395).